The sequence spans 724 residues: Phosphoribosylformylglycinamidine synthase subunit PurL (724 aa).

The active site involves histidine 34. 2 residues coordinate ATP: tyrosine 37 and lysine 75. A Mg(2+)-binding site is contributed by glutamate 77. Substrate-binding positions include 78 to 81 (SHNH) and arginine 100. Histidine 79 (proton acceptor) is an active-site residue. Residue aspartate 101 coordinates Mg(2+). Glutamine 221 lines the substrate pocket. Position 249 (aspartate 249) interacts with Mg(2+). 292-294 (ESQ) provides a ligand contact to substrate. Aspartate 478 and glycine 515 together coordinate ATP. Serine 518 lines the substrate pocket.

The protein belongs to the FGAMS family. In terms of assembly, monomer. Part of the FGAM synthase complex composed of 1 PurL, 1 PurQ and 2 PurS subunits.

It is found in the cytoplasm. The catalysed reaction is N(2)-formyl-N(1)-(5-phospho-beta-D-ribosyl)glycinamide + L-glutamine + ATP + H2O = 2-formamido-N(1)-(5-O-phospho-beta-D-ribosyl)acetamidine + L-glutamate + ADP + phosphate + H(+). Its pathway is purine metabolism; IMP biosynthesis via de novo pathway; 5-amino-1-(5-phospho-D-ribosyl)imidazole from N(2)-formyl-N(1)-(5-phospho-D-ribosyl)glycinamide: step 1/2. In terms of biological role, part of the phosphoribosylformylglycinamidine synthase complex involved in the purines biosynthetic pathway. Catalyzes the ATP-dependent conversion of formylglycinamide ribonucleotide (FGAR) and glutamine to yield formylglycinamidine ribonucleotide (FGAM) and glutamate. The FGAM synthase complex is composed of three subunits. PurQ produces an ammonia molecule by converting glutamine to glutamate. PurL transfers the ammonia molecule to FGAR to form FGAM in an ATP-dependent manner. PurS interacts with PurQ and PurL and is thought to assist in the transfer of the ammonia molecule from PurQ to PurL. This Caldivirga maquilingensis (strain ATCC 700844 / DSM 13496 / JCM 10307 / IC-167) protein is Phosphoribosylformylglycinamidine synthase subunit PurL.